The sequence spans 240 residues: Uridylate kinase (240 aa).

12-15 (KISG) is a binding site for ATP. Residues 20-25 (GNQGFG) form an involved in allosteric activation by GTP region. Gly54 serves as a coordination point for UMP. Positions 55 and 59 each coordinate ATP. UMP contacts are provided by residues Asp74 and 135–142 (TGNPYFST). Positions 168 and 171 each coordinate ATP.

This sequence belongs to the UMP kinase family. Homohexamer.

The protein localises to the cytoplasm. The catalysed reaction is UMP + ATP = UDP + ADP. It participates in pyrimidine metabolism; CTP biosynthesis via de novo pathway; UDP from UMP (UMPK route): step 1/1. Allosterically activated by GTP. Inhibited by UTP. In terms of biological role, catalyzes the reversible phosphorylation of UMP to UDP. The polypeptide is Uridylate kinase (Moorella thermoacetica (strain ATCC 39073 / JCM 9320)).